Reading from the N-terminus, the 240-residue chain is MRPSYFISDLHLSEKHPELTELLLRFLRSAAAGQARAVYILGDLFDFWVGDDEVSELNTSVAREIRKLSDKGVAVFFVRGNRDFLIGRDFCRQAGMTLLPDYSVLDLFGSNTLICHGDTLCTDDKAYLRFRRIVHCRRLQKLFLMLPLKWRTRLAAKIRRVSKMEKQVKPADIMDVNAAFTARQVRAFNAERLIHGHTHREHIHHENGFTRIVLGDWHNDYASILRVDGDGAVFVPPEEC.

5 residues coordinate Mn(2+): Asp-9, His-11, Asp-43, Asn-81, and His-116. A substrate-binding site is contributed by 81–82; the sequence is NR. Positions 124, 162, 166, 169, and 197 each coordinate substrate. Residues His-197 and His-199 each contribute to the Mn(2+) site.

It belongs to the LpxH family. Mn(2+) serves as cofactor.

It is found in the cell inner membrane. The catalysed reaction is UDP-2-N,3-O-bis[(3R)-3-hydroxytetradecanoyl]-alpha-D-glucosamine + H2O = 2-N,3-O-bis[(3R)-3-hydroxytetradecanoyl]-alpha-D-glucosaminyl 1-phosphate + UMP + 2 H(+). It functions in the pathway glycolipid biosynthesis; lipid IV(A) biosynthesis; lipid IV(A) from (3R)-3-hydroxytetradecanoyl-[acyl-carrier-protein] and UDP-N-acetyl-alpha-D-glucosamine: step 4/6. Functionally, hydrolyzes the pyrophosphate bond of UDP-2,3-diacylglucosamine to yield 2,3-diacylglucosamine 1-phosphate (lipid X) and UMP by catalyzing the attack of water at the alpha-P atom. Involved in the biosynthesis of lipid A, a phosphorylated glycolipid that anchors the lipopolysaccharide to the outer membrane of the cell. In Neisseria gonorrhoeae (strain ATCC 700825 / FA 1090), this protein is UDP-2,3-diacylglucosamine hydrolase.